Here is a 352-residue protein sequence, read N- to C-terminus: UPF0252 protein MJ1282 (352 aa).

This sequence belongs to the UPF0252 family.

This Methanocaldococcus jannaschii (strain ATCC 43067 / DSM 2661 / JAL-1 / JCM 10045 / NBRC 100440) (Methanococcus jannaschii) protein is UPF0252 protein MJ1282.